Here is a 395-residue protein sequence, read N- to C-terminus: Chorismate synthase (395 aa).

Residue Arg-48 coordinates NADP(+). FMN is bound at residue 125 to 127 (RSS). A disordered region spans residues 264-292 (RNEDWTFDDGESFDHVESEEGDPVPVGND). Residues Gly-298, 313 to 317 (HAPTS), and Arg-340 each bind FMN. The tract at residues 373–395 (PDRVDGNPGQYDTDYHPSSPDND) is disordered.

This sequence belongs to the chorismate synthase family. FMNH2 serves as cofactor.

It carries out the reaction 5-O-(1-carboxyvinyl)-3-phosphoshikimate = chorismate + phosphate. Its pathway is metabolic intermediate biosynthesis; chorismate biosynthesis; chorismate from D-erythrose 4-phosphate and phosphoenolpyruvate: step 7/7. Its function is as follows. Catalyzes the anti-1,4-elimination of the C-3 phosphate and the C-6 proR hydrogen from 5-enolpyruvylshikimate-3-phosphate (EPSP) to yield chorismate, which is the branch point compound that serves as the starting substrate for the three terminal pathways of aromatic amino acid biosynthesis. This reaction introduces a second double bond into the aromatic ring system. The polypeptide is Chorismate synthase (Halorubrum lacusprofundi (strain ATCC 49239 / DSM 5036 / JCM 8891 / ACAM 34)).